Reading from the N-terminus, the 209-residue chain is Cytidylyl-2-hydroxypropylphosphonate hydrolase (209 aa).

Residues N111, D127, E129, and D131 each coordinate a divalent metal cation. K144 (proton donor) is an active-site residue. D145 contacts a divalent metal cation.

The protein belongs to the FomD family. Monomer in solution. The cofactor is Mn(2+). Co(2+) serves as cofactor.

The catalysed reaction is cytidine 5'-({hydroxy[(S)-2-hydroxypropyl]phosphonoyl}phosphate) + H2O = (S)-2-hydroxypropylphosphonate + CMP + H(+). It participates in antibiotic biosynthesis; fosfomycin biosynthesis. With respect to regulation, hydrolysis of (S)-HPP-CMP is inhibited by CDP. Involved in fosfomycin biosynthesis. Catalyzes the hydrolysis of cytidylyl (S)-2-hydroxypropylphosphonate ((S)-HPP-CMP) to give (S)-2-hydroxypropylphosphonate ((S)-HPP) and CMP. Can also hydrolyze (R)-HPP-CMP and cytidylyl 2-hydroxyethylphosphonate (HEP-CMP), which is a biosynthetic intermediate before C-methylation, but the catalytic efficiency is much higher with (S)-HPP-CMP. The chain is Cytidylyl-2-hydroxypropylphosphonate hydrolase from Streptomyces wedmorensis.